The following is a 114-amino-acid chain: DNA-directed RNA polymerases II, IV and V subunit 9A (114 aa).

The Zn(2+) site is built by Cys7, Cys10, Cys29, Cys32, Cys76, Cys79, Cys103, and Cys108. The TFIIS-type zinc-finger motif lies at 72 to 113; that stretch reads KAVRCSKCQHREAVFFQATARGEEGMTLFFVCCNPNCGHRWR.

It belongs to the archaeal RpoM/eukaryotic RPA12/RPB9/RPC11 RNA polymerase family. As to quaternary structure, component of the RNA polymerase II, IV and V complexes. Interacts with NRPD1.

Its subcellular location is the nucleus. It is found in the nucleolus. DNA-dependent RNA polymerase catalyzes the transcription of DNA into RNA using the four ribonucleoside triphosphates as substrates. Component of RNA polymerase II which synthesizes mRNA precursors and many functional non-coding RNAs. Pol II is the central component of the basal RNA polymerase II transcription machinery. It is composed of mobile elements that move relative to each other. Component of RNA polymerases IV and V which mediate short-interfering RNAs (siRNA) accumulation and subsequent RNA-directed DNA methylation-dependent (RdDM) transcriptional gene silencing (TGS) of endogenous repeated sequences, including transposable elements. Required for RNA silencing. The sequence is that of DNA-directed RNA polymerases II, IV and V subunit 9A (NRPB9A) from Arabidopsis thaliana (Mouse-ear cress).